The following is a 139-amino-acid chain: Small ribosomal subunit protein uS12m (139 aa).

A disordered region spans residues 1–21 (MLSTLYQNDLKKKRNRRRNRS). Residues 11–20 (KKKRNRRRNR) show a composition bias toward basic residues.

The protein belongs to the universal ribosomal protein uS12 family.

Its subcellular location is the mitochondrion. In terms of biological role, protein S12 is involved in the translation initiation step. The polypeptide is Small ribosomal subunit protein uS12m (RPS12) (Paramecium tetraurelia).